Here is a 62-residue protein sequence, read N- to C-terminus: MKCKKQLLVIFFAYFLVVNESEAIFGSLFSLGSKLLPTVFKLFSRKKQRALMKRDLEDIMDP.

The N-terminal stretch at 1-23 (MKCKKQLLVIFFAYFLVVNESEA) is a signal peptide. The propeptide occupies 49–62 (RALMKRDLEDIMDP).

Belongs to the non-disulfide-bridged peptide (NDBP) superfamily. Medium-length antimicrobial peptide (group 3) family. Ponericin-W subfamily. As to expression, expressed by the venom gland.

It localises to the secreted. The protein localises to the target cell membrane. Antimicrobial peptide with potent activity against a range of Gram-positive and Gram-negative bacteria. Has high hemolytic activity against erythrocytes. May act by disrupting the integrity of the bacterial cell membrane. In Lychas mucronatus (Chinese swimming scorpion), this protein is Ponericin-W-like 32.2.